A 240-amino-acid chain; its full sequence is Gas vesicle protein C (240 aa).

A compositionally biased stretch (basic and acidic residues) spans 1 to 13; that stretch reads MALKDKWQQDRIG. The segment at 1–20 is disordered; it reads MALKDKWQQDRIGRQQGVQE. Repeats lie at residues 18–50, 51–83, 84–116, 117–149, and 150–207; these read VQER…RQGF, VTGV…LENF, IQQL…LSEF, REDL…LAIF, and RQTL…LQDY. Residues 18 to 207 form a 5 X 33 AA tandem repeats region; the sequence is VQERQQQVQT…GVFRAELQDY (190 aa).

This sequence belongs to the gas vesicle GvpC family.

Its subcellular location is the gas vesicle. Confers stability, involved in shaping gas vesicles, hollow, gas filled proteinaceous nanostructures. During planktonic growth they allow positioning of the organism at a favorable depth for light or nutrient acquisition. This Planktothrix agardhii (Oscillatoria agardhii) protein is Gas vesicle protein C.